The primary structure comprises 471 residues: Ribulose bisphosphate carboxylase large chain (471 aa).

The substrate site is built by Asn119 and Thr169. The active-site Proton acceptor is the Lys171. Lys173 lines the substrate pocket. Positions 197, 199, and 200 each coordinate Mg(2+). Residue Lys197 is modified to N6-carboxylysine. The active-site Proton acceptor is His290. 3 residues coordinate substrate: Arg291, His323, and Ser375.

This sequence belongs to the RuBisCO large chain family. Type I subfamily. As to quaternary structure, heterohexadecamer of 8 large chains and 8 small chains; disulfide-linked. The disulfide link is formed within the large subunit homodimers. The cofactor is Mg(2+). In terms of processing, the disulfide bond which can form in the large chain dimeric partners within the hexadecamer appears to be associated with oxidative stress and protein turnover.

The protein localises to the carboxysome. The catalysed reaction is 2 (2R)-3-phosphoglycerate + 2 H(+) = D-ribulose 1,5-bisphosphate + CO2 + H2O. The enzyme catalyses D-ribulose 1,5-bisphosphate + O2 = 2-phosphoglycolate + (2R)-3-phosphoglycerate + 2 H(+). Its function is as follows. RuBisCO catalyzes two reactions: the carboxylation of D-ribulose 1,5-bisphosphate, the primary event in carbon dioxide fixation, as well as the oxidative fragmentation of the pentose substrate in the photorespiration process. Both reactions occur simultaneously and in competition at the same active site. The polypeptide is Ribulose bisphosphate carboxylase large chain (Crocosphaera subtropica (strain ATCC 51142 / BH68) (Cyanothece sp. (strain ATCC 51142))).